The sequence spans 347 residues: Methylthioribose-1-phosphate isomerase (347 aa).

Substrate contacts are provided by residues 45-47 (RGA), R88, and Q197. Catalysis depends on D238, which acts as the Proton donor. 248-249 (NK) provides a ligand contact to substrate.

Belongs to the eIF-2B alpha/beta/delta subunits family. MtnA subfamily.

It carries out the reaction 5-(methylsulfanyl)-alpha-D-ribose 1-phosphate = 5-(methylsulfanyl)-D-ribulose 1-phosphate. It functions in the pathway amino-acid biosynthesis; L-methionine biosynthesis via salvage pathway; L-methionine from S-methyl-5-thio-alpha-D-ribose 1-phosphate: step 1/6. In terms of biological role, catalyzes the interconversion of methylthioribose-1-phosphate (MTR-1-P) into methylthioribulose-1-phosphate (MTRu-1-P). In Trichormus variabilis (strain ATCC 29413 / PCC 7937) (Anabaena variabilis), this protein is Methylthioribose-1-phosphate isomerase.